We begin with the raw amino-acid sequence, 380 residues long: Cytochrome b (380 aa).

The next 4 helical transmembrane spans lie at 34–54 (FGSL…LLAM), 78–99 (WLIR…YLHI), 114–134 (WNIG…GYVL), and 179–199 (LFAL…VHLT). The heme b site is built by His-84 and His-98. The heme b site is built by His-183 and His-197. His-202 contributes to the a ubiquinone binding site. 4 consecutive transmembrane segments (helical) span residues 227-247 (IKDL…ALFA), 289-309 (LGGV…PLLH), 321-341 (LSQM…WVGS), and 348-368 (FIII…VLFP).

The protein belongs to the cytochrome b family. In terms of assembly, the cytochrome bc1 complex contains 11 subunits: 3 respiratory subunits (MT-CYB, CYC1 and UQCRFS1), 2 core proteins (UQCRC1 and UQCRC2) and 6 low-molecular weight proteins (UQCRH/QCR6, UQCRB/QCR7, UQCRQ/QCR8, UQCR10/QCR9, UQCR11/QCR10 and a cleavage product of UQCRFS1). This cytochrome bc1 complex then forms a dimer. Requires heme b as cofactor.

It localises to the mitochondrion inner membrane. Component of the ubiquinol-cytochrome c reductase complex (complex III or cytochrome b-c1 complex) that is part of the mitochondrial respiratory chain. The b-c1 complex mediates electron transfer from ubiquinol to cytochrome c. Contributes to the generation of a proton gradient across the mitochondrial membrane that is then used for ATP synthesis. The chain is Cytochrome b (MT-CYB) from Aphelocoma coerulescens (Florida scrub-jay).